We begin with the raw amino-acid sequence, 1284 residues long: Neuronal cell adhesion molecule (1284 aa).

The N-terminal stretch at 1–24 is a signal peptide; sequence MMKEKSISASKASLVFFLCQMISA. Residues 25 to 1143 lie on the Extracellular side of the membrane; the sequence is LDVPLDSKLL…ASRQVDIATQ (1119 aa). 6 Ig-like C2-type domains span residues 41 to 129, 136 to 230, 243 to 332, 337 to 424, 430 to 517, and 521 to 608; these read PTIT…AAIS, PSRS…QPIS, PPVL…ISVT, PYWI…AFVN, PRIL…VQLE, and PTMI…AVLT. Cystine bridges form between C63–C118 and C162–C213. N-linked (GlcNAc...) asparagine glycosylation is present at N78. N-linked (GlcNAc...) asparagine glycosylation is found at N218 and N290. Intrachain disulfides connect C268–C316 and C358–C408. 6 N-linked (GlcNAc...) asparagine glycosylation sites follow: N409, N483, N576, N581, N595, and N692. 2 disulfide bridges follow: C452–C501 and C543–C592. Fibronectin type-III domains follow at residues 625 to 720, 725 to 819, 824 to 926, 930 to 1026, and 1040 to 1132; these read PPLD…TKSA, NPSN…SGED, APGN…TPEG, PPSF…IMDE, and QPLY…TGPA. The segment covering 707–731 has biased composition (polar residues); it reads QPSEPSEQYLTKSANPDENPSNVQG. The segment at 707-732 is disordered; the sequence is QPSEPSEQYLTKSANPDENPSNVQGI. N778, N834, N885, N969, N985, N995, N1048, N1059, and N1091 each carry an N-linked (GlcNAc...) asparagine glycan. The helical transmembrane segment at 1144 to 1166 threads the bilayer; the sequence is GWFIGLMCAVALLILILLIVCFI. Residues 1167–1284 lie on the Cytoplasmic side of the membrane; it reads RRNKGGKYPV…SPVNAMNSFV (118 aa). Composition is skewed to basic and acidic residues over residues 1175–1195, 1202–1212, and 1221–1230; these read PVKE…KEDD, RSLESDAEDHK, and PSDRTVKKED. A disordered region spans residues 1175 to 1284; sequence PVKEKEDAHA…SPVNAMNSFV (110 aa). The span at 1268-1284 shows a compositional bias: polar residues; that stretch reads NESSEAPSPVNAMNSFV.

This sequence belongs to the immunoglobulin superfamily. L1/neurofascin/NgCAM family. In terms of assembly, heterodimer of an alpha and a beta chain. In terms of tissue distribution, retina and developing brain.

Its subcellular location is the cell membrane. In terms of biological role, this protein is a cell adhesion molecule involved in neuron-neuron adhesion, neurite fasciculation, outgrowth of neurites, etc. Specifically involved in the development of optic fibres in the retina. The polypeptide is Neuronal cell adhesion molecule (Gallus gallus (Chicken)).